The chain runs to 214 residues: Ribosomal RNA small subunit methyltransferase G (214 aa).

S-adenosyl-L-methionine contacts are provided by residues Gly81, Met86, 132 to 133 (VE), and Arg147.

Belongs to the methyltransferase superfamily. RNA methyltransferase RsmG family.

The protein localises to the cytoplasm. It catalyses the reaction guanosine(527) in 16S rRNA + S-adenosyl-L-methionine = N(7)-methylguanosine(527) in 16S rRNA + S-adenosyl-L-homocysteine. Its function is as follows. Specifically methylates the N7 position of guanine in position 527 of 16S rRNA. The protein is Ribosomal RNA small subunit methyltransferase G of Pseudomonas fluorescens (strain Pf0-1).